Consider the following 580-residue polypeptide: Alpha-glucosidase (580 aa).

Residues 1–19 (MRPLGALSLFALLATTVSG) form the signal peptide. Residues Asn102 and Asn127 are each glycosylated (N-linked (GlcNAc...) asparagine). Catalysis depends on Asp224, which acts as the Nucleophile. Glu290 functions as the Proton donor in the catalytic mechanism. Residue Asn501 is glycosylated (N-linked (GlcNAc...) asparagine). Residues 560 to 580 (AAAINLSIGLLLAIMARYIFV) traverse the membrane as a helical segment.

This sequence belongs to the glycosyl hydrolase 13 family. (Microbial infection) Binds to L.sphaericus BinB subunit of the binary toxin BinAB. In terms of tissue distribution, in 4th-instar larvae produced in the brush border membranes of the gastric caeca and the posterior stomach cells (at protein level).

The protein localises to the membrane. The enzyme catalyses Hydrolysis of terminal, non-reducing (1-&gt;4)-linked alpha-D-glucose residues with release of alpha-D-glucose.. In terms of biological role, probably an alpha-glucosidase, it has no alpha-amylase function. Functionally, (Microbial infection) Serves as the larval receptor for Lysinibacillus sphaericus BinB toxin. The protein is Alpha-glucosidase of Culex pipiens (House mosquito).